Consider the following 723-residue polypeptide: Nucleolar protein 11 (723 aa).

The protein resides in the nucleus. It is found in the nucleolus. In terms of biological role, ribosome biogenesis factor. May be required for both optimal rDNA transcription and pre-rRNA processing. The polypeptide is Nucleolar protein 11 (NOL11) (Gallus gallus (Chicken)).